Reading from the N-terminus, the 371-residue chain is Cathepsin L1 (371 aa).

Residues 1 to 48 (MNHLGVFETRFRPRTRHKSQRAQLIPEQITMRTAVLLPLLALLAVAQA) form the signal peptide. Positions 49–153 (VSFADVVMEE…VTFISPAHVT (105 aa)) are cleaved as a propeptide — activation peptide. A glycan (N-linked (GlcNAc...) asparagine) is linked at N127. Disulfide bonds link C175-C218, C209-C251, and C310-C360. The active site involves C178. The active site involves H317. A propeptide spanning residues 327–329 (DES) is cleaved from the precursor. The active site involves N338.

It belongs to the peptidase C1 family. Dimer of a heavy and a light chain linked by disulfide bonds. In terms of tissue distribution, in the embryo, predominantly expressed in the midgut. Also expressed in larval alimentary organs such as salivary gland and midgut including gastric caeca.

It is found in the lysosome. It catalyses the reaction Specificity close to that of papain. As compared to cathepsin B, cathepsin L exhibits higher activity toward protein substrates, but has little activity on Z-Arg-Arg-NHMec, and no peptidyl-dipeptidase activity.. In terms of biological role, important for the overall degradation of proteins in lysosomes. Essential for adult male and female fertility. May play a role in digestion. This is Cathepsin L1 from Drosophila melanogaster (Fruit fly).